A 102-amino-acid chain; its full sequence is Small ribosomal subunit protein uS10 (102 aa).

The protein belongs to the universal ribosomal protein uS10 family. As to quaternary structure, part of the 30S ribosomal subunit.

Involved in the binding of tRNA to the ribosomes. This Phenylobacterium zucineum (strain HLK1) protein is Small ribosomal subunit protein uS10.